Reading from the N-terminus, the 433-residue chain is Phosphomethylpyrimidine synthase 1 (433 aa).

Substrate contacts are provided by residues methionine 95, tyrosine 124, histidine 163, 185-187 (SRG), 226-229 (NAMR), and glutamate 265. Residue histidine 269 coordinates Zn(2+). A substrate-binding site is contributed by tyrosine 292. Histidine 333 serves as a coordination point for Zn(2+). Cysteine 408, cysteine 411, and cysteine 415 together coordinate [4Fe-4S] cluster.

Belongs to the ThiC family. [4Fe-4S] cluster serves as cofactor.

The catalysed reaction is 5-amino-1-(5-phospho-beta-D-ribosyl)imidazole + S-adenosyl-L-methionine = 4-amino-2-methyl-5-(phosphooxymethyl)pyrimidine + CO + 5'-deoxyadenosine + formate + L-methionine + 3 H(+). Its pathway is cofactor biosynthesis; thiamine diphosphate biosynthesis. Its function is as follows. Catalyzes the synthesis of the hydroxymethylpyrimidine phosphate (HMP-P) moiety of thiamine from aminoimidazole ribotide (AIR) in a radical S-adenosyl-L-methionine (SAM)-dependent reaction. This Methanothermobacter thermautotrophicus (strain ATCC 29096 / DSM 1053 / JCM 10044 / NBRC 100330 / Delta H) (Methanobacterium thermoautotrophicum) protein is Phosphomethylpyrimidine synthase 1.